Consider the following 251-residue polypeptide: 2,3-bisphosphoglycerate-dependent phosphoglycerate mutase (251 aa).

Substrate-binding positions include 13–20, 26–27, R65, 92–95, K103, 119–120, and 186–187; these read RHGESEWN, TG, ERHY, RR, and GN. Residue H14 is the Tele-phosphohistidine intermediate of the active site. The active-site Proton donor/acceptor is the E92.

The protein belongs to the phosphoglycerate mutase family. BPG-dependent PGAM subfamily.

It catalyses the reaction (2R)-2-phosphoglycerate = (2R)-3-phosphoglycerate. It participates in carbohydrate degradation; glycolysis; pyruvate from D-glyceraldehyde 3-phosphate: step 3/5. Its function is as follows. Catalyzes the interconversion of 2-phosphoglycerate and 3-phosphoglycerate. This chain is 2,3-bisphosphoglycerate-dependent phosphoglycerate mutase, found in Rhodococcus opacus (strain B4).